A 304-amino-acid chain; its full sequence is Cytochrome c biogenesis protein CcsA (304 aa).

The next 8 helical transmembrane spans lie at 11–31 (SLGFAGFVLLLLAMPLAFWAV), 37–57 (AGLVRLLVAVANLLFTAQLIL), 63–83 (GHFPISNLYESLCFLAWACTL), 96–116 (IVAAAATPMGLGCIAFASFAL), 141–161 (VIMVSYAALLVGSLLSLAVLV), 212–232 (TITVGFLMLTVGIVSGAVWAN), 246–263 (TWALICWLVYAAYLHTRL), and 275–295 (VAVVGLVVIAVCYIGVNLLGI).

The protein belongs to the CcmF/CycK/Ccl1/NrfE/CcsA family. May interact with ccs1.

It is found in the cellular thylakoid membrane. Its function is as follows. Required during biogenesis of c-type cytochromes (cytochrome c6 and cytochrome f) at the step of heme attachment. The chain is Cytochrome c biogenesis protein CcsA from Synechococcus sp. (strain CC9605).